We begin with the raw amino-acid sequence, 264 residues long: 4-oxalocrotonate decarboxylase (264 aa).

The protein belongs to the hydratase/decarboxylase family.

It carries out the reaction (3E)-2-oxohex-3-enedioate + H(+) = 2-oxopent-4-enoate + CO2. It participates in aromatic compound metabolism; benzoate degradation via hydroxylation. The protein is 4-oxalocrotonate decarboxylase (dmpH) of Pseudomonas sp. (strain CF600).